The following is a 446-amino-acid chain: MGLACAVSLSLCLIVSAILIVNARQAVQEETESAFRLAHEAVVRRLPPSHGGRDTMTEAIGLAEEIDGLRHVSARILDPEGQPLQHRAHGQLRSEASAPQWFSALMTPPLVEALVPITHYPNVLGMLRVAADPTDEIAEVWGDFSIILPVLFLAGLAMVGLAFLMTTLLTRRLQSVQAAMAQMQDGRLSVRAPDDRLTEFADLAAGVNALASHLQAEQAENDLLQARLIGSSEAERSRIALDLHDEMGPQLFALRAAVSHAQAMTADLPERPAALDETLDAIAGHALEVQRSARTAINDLRPMLLGEASLAELLAELVTGFRDVASETRVVLDVDPEVEGSSPGELAELSIYRFARESVLNAMRHGRATVVRVSLDTMPDEPGQIVVRVTDNGKGPQSGTGRPTPGFGQIGIEDRARALGATYLPPWRDNRLTHTELRMPRPCKLR.

3 helical membrane-spanning segments follow: residues 1–21, 101–121, and 144–164; these read MGLA…ILIV, WFSA…THYP, and FSII…LAFL. The HAMP domain occupies 167–219; it reads TLLTRRLQSVQAAMAQMQDGRLSVRAPDDRLTEFADLAAGVNALASHLQAEQA. Residues 390–409 form a disordered region; that stretch reads TDNGKGPQSGTGRPTPGFGQ.

It localises to the cell inner membrane. Member of the two-component regulatory system MoxY/MoxX probably involved in the regulation of the methanol dehydrogenase expression. May function as a membrane-associated protein kinase that phosphorylates MoxX in response to environmental signals. The sequence is that of Methanol utilization control sensor protein MoxY (moxY) from Paracoccus denitrificans.